A 343-amino-acid chain; its full sequence is Mas-related G-protein coupled receptor member F (343 aa).

Topologically, residues 1 to 44 are extracellular; the sequence is MAGNCSWEAHPGNRNKMCPGLSEAPELYSRGFLTIEQIAMLPPP. N4 carries N-linked (GlcNAc...) asparagine glycosylation. The helical transmembrane segment at 45–66 threads the bilayer; the sequence is AVMNYIFLLLCLCGLVGNGLVL. At 67–82 the chain is on the cytoplasmic side; that stretch reads WFFGFSIKRNPFSIYF. The helical transmembrane segment at 83–104 threads the bilayer; sequence LHLASADVGYLFSKAVFSILNT. The Extracellular segment spans residues 105 to 123; it reads GGFLGTFADYIRSVCRVLG. A helical transmembrane segment spans residues 124–144; it reads LCMFLTGVSLLPAVSAERCAS. Residues 145–160 are Cytoplasmic-facing; that stretch reads VIFPAWYWRRRPKRLS. Residues 161-181 traverse the membrane as a helical segment; sequence AVVCALLWVLSLLVTCLHNYF. Residues 182-198 are Extracellular-facing; it reads CVFLGRGAPGAACRHMD. The helical transmembrane segment at 199–220 threads the bilayer; the sequence is IFLGILLFLLCCPLMVLPCLAL. The Cytoplasmic segment spans residues 221 to 241; sequence ILHVECRARRRQRSAKLNHVI. The chain crosses the membrane as a helical span at residues 242–263; sequence LAMVSVFLVSSIYLGIDWFLFW. At 264-273 the chain is on the extracellular side; it reads VFQIPAPFPE. A helical transmembrane segment spans residues 274–294; the sequence is YVTDLCICINSSAKPIVYFLA. Topologically, residues 295-343 are cytoplasmic; that stretch reads GRDKSQRLWEPLRVVFQRALRDGAELGEAGGSTPNTVTMEMQCPPGNAS. Positions 320–343 are disordered; the sequence is LGEAGGSTPNTVTMEMQCPPGNAS.

It belongs to the G-protein coupled receptor 1 family. Mas subfamily.

The protein localises to the cell membrane. Orphan receptor. May bind to a neuropeptide and may regulate nociceptor function and/or development, including the sensation or modulation of pain. This is Mas-related G-protein coupled receptor member F (MRGPRF) from Homo sapiens (Human).